Reading from the N-terminus, the 249-residue chain is Phycobilisome 27.9 kDa linker polypeptide, phycoerythrin-associated, rod (249 aa).

Positions 2–166 constitute a PBS-linker domain; that stretch reads ASQTILELWP…LDRGPAQIDS (165 aa). Positions 198-248 constitute a CpcD-like domain; sequence EKRFKILVQGSKFDSPRRISTTEYIVPASKMTPQIQRINRTSGKIVSITEI.

It belongs to the phycobilisome linker protein family. As to quaternary structure, the phycobilisome is a hemidiscoidal structure that is composed of two distinct substructures: a core complex and six rods radiating from the core.

It localises to the cellular thylakoid membrane. Rod linker protein, associated with phycoerythrin. Linker polypeptides determine the state of aggregation and the location of the disk-shaped phycobiliprotein units within the phycobilisome and modulate their spectroscopic properties in order to mediate a directed and optimal energy transfer. This is Phycobilisome 27.9 kDa linker polypeptide, phycoerythrin-associated, rod (cpeD) from Microchaete diplosiphon (Fremyella diplosiphon).